A 219-amino-acid chain; its full sequence is Transcriptional regulatory protein QseB (219 aa).

The region spanning 2 to 116 is the Response regulatory domain; sequence RILLVEDDTL…EVAARLEALV (115 aa). Aspartate 51 bears the 4-aspartylphosphate mark. The segment at residues 124-218 is a DNA-binding region (ompR/PhoB-type); that stretch reads SSELRHGQVT…VHGIGYTLGD (95 aa).

In terms of processing, phosphorylated by QseC.

It is found in the cytoplasm. In terms of biological role, member of a two-component regulatory system QseB/QseC. Activates the flagella regulon by activating transcription of flhDC. The chain is Transcriptional regulatory protein QseB (qseB) from Salmonella typhimurium (strain LT2 / SGSC1412 / ATCC 700720).